Reading from the N-terminus, the 232-residue chain is Phosphatidylserine decarboxylase proenzyme (232 aa).

S190 acts as the Schiff-base intermediate with substrate; via pyruvic acid in catalysis. Position 190 is a pyruvic acid (Ser); by autocatalysis (S190).

The protein belongs to the phosphatidylserine decarboxylase family. PSD-A subfamily. As to quaternary structure, heterodimer of a large membrane-associated beta subunit and a small pyruvoyl-containing alpha subunit. Pyruvate serves as cofactor. Post-translationally, is synthesized initially as an inactive proenzyme. Formation of the active enzyme involves a self-maturation process in which the active site pyruvoyl group is generated from an internal serine residue via an autocatalytic post-translational modification. Two non-identical subunits are generated from the proenzyme in this reaction, and the pyruvate is formed at the N-terminus of the alpha chain, which is derived from the carboxyl end of the proenzyme. The post-translation cleavage follows an unusual pathway, termed non-hydrolytic serinolysis, in which the side chain hydroxyl group of the serine supplies its oxygen atom to form the C-terminus of the beta chain, while the remainder of the serine residue undergoes an oxidative deamination to produce ammonia and the pyruvoyl prosthetic group on the alpha chain.

It localises to the cell membrane. The enzyme catalyses a 1,2-diacyl-sn-glycero-3-phospho-L-serine + H(+) = a 1,2-diacyl-sn-glycero-3-phosphoethanolamine + CO2. It functions in the pathway phospholipid metabolism; phosphatidylethanolamine biosynthesis; phosphatidylethanolamine from CDP-diacylglycerol: step 2/2. Catalyzes the formation of phosphatidylethanolamine (PtdEtn) from phosphatidylserine (PtdSer). This chain is Phosphatidylserine decarboxylase proenzyme, found in Afipia carboxidovorans (strain ATCC 49405 / DSM 1227 / KCTC 32145 / OM5) (Oligotropha carboxidovorans).